A 428-amino-acid polypeptide reads, in one-letter code: Histidine--tRNA ligase (428 aa).

It belongs to the class-II aminoacyl-tRNA synthetase family. In terms of assembly, homodimer.

It localises to the cytoplasm. It carries out the reaction tRNA(His) + L-histidine + ATP = L-histidyl-tRNA(His) + AMP + diphosphate + H(+). The protein is Histidine--tRNA ligase of Lactobacillus delbrueckii subsp. bulgaricus (strain ATCC BAA-365 / Lb-18).